The primary structure comprises 1036 residues: Phospholipase D1 (1036 aa).

Residues 81–212 form the PX domain; it reads IKAQVLEVER…TEFLDVSQLS (132 aa). The PH domain maps to 219 to 328; it reads PKGLEGMIMK…WGGAIEEFIQ (110 aa). 2 S-palmitoyl cysteine lipidation sites follow: Cys-240 and Cys-241. The PLD phosphodiesterase 1 domain maps to 459-486; that stretch reads YLWAHHEKLVIIDQSVAFVGGIDLAYGR. The segment at 463–890 is catalytic; it reads HHEKLVIIDQ…MLGKRDSEMA (428 aa). Phosphoserine is present on residues Ser-499, Ser-561, and Ser-591. Positions 853–880 constitute a PLD phosphodiesterase 2 domain; it reads ELIYVHSKLLIADDNTVIIGSANINDRS.

This sequence belongs to the phospholipase D family. Interacts with PIP5K1B.

The protein resides in the cytoplasm. It is found in the perinuclear region. Its subcellular location is the endoplasmic reticulum membrane. It localises to the golgi apparatus membrane. The protein localises to the late endosome membrane. The catalysed reaction is a 1,2-diacyl-sn-glycero-3-phosphocholine + H2O = a 1,2-diacyl-sn-glycero-3-phosphate + choline + H(+). Its activity is regulated as follows. Stimulated by phosphatidylinositol 4,5-bisphosphate and phosphatidylinositol 3,4,5-trisphosphate, activated by the phosphokinase C-alpha, by the ADP-ribosylation factor-1 (ARF-1), and to a lesser extent by GTP-binding proteins: RHO A, RAC-1 and CDC42. Implicated as a critical step in numerous cellular pathways, including signal transduction, membrane trafficking, and the regulation of mitosis. May be involved in the regulation of perinuclear intravesicular membrane traffic. The polypeptide is Phospholipase D1 (PLD1) (Cricetulus griseus (Chinese hamster)).